Consider the following 702-residue polypeptide: Elongation factor G (702 aa).

Residues His8–Thr290 enclose the tr-type G domain. GTP-binding positions include Ala17 to Thr24, Asp87 to His91, and Asn141 to Asp144.

The protein belongs to the TRAFAC class translation factor GTPase superfamily. Classic translation factor GTPase family. EF-G/EF-2 subfamily.

It localises to the cytoplasm. Functionally, catalyzes the GTP-dependent ribosomal translocation step during translation elongation. During this step, the ribosome changes from the pre-translocational (PRE) to the post-translocational (POST) state as the newly formed A-site-bound peptidyl-tRNA and P-site-bound deacylated tRNA move to the P and E sites, respectively. Catalyzes the coordinated movement of the two tRNA molecules, the mRNA and conformational changes in the ribosome. The sequence is that of Elongation factor G from Aliarcobacter butzleri (strain RM4018) (Arcobacter butzleri).